We begin with the raw amino-acid sequence, 504 residues long: uncharacterized protein (504 aa).

Residues 431–483 form a disordered region; sequence GEAEKYRKLQDGDEDEEGTGKPEPKKARRKGFGGKFAPKHEEKVTRAVGVNSE.

It belongs to the CBF/MAK21 family.

This is an uncharacterized protein from Caenorhabditis elegans.